The chain runs to 246 residues: 3-deoxy-manno-octulosonate cytidylyltransferase (246 aa).

This sequence belongs to the KdsB family.

The protein localises to the cytoplasm. The catalysed reaction is 3-deoxy-alpha-D-manno-oct-2-ulosonate + CTP = CMP-3-deoxy-beta-D-manno-octulosonate + diphosphate. It participates in nucleotide-sugar biosynthesis; CMP-3-deoxy-D-manno-octulosonate biosynthesis; CMP-3-deoxy-D-manno-octulosonate from 3-deoxy-D-manno-octulosonate and CTP: step 1/1. The protein operates within bacterial outer membrane biogenesis; lipopolysaccharide biosynthesis. Activates KDO (a required 8-carbon sugar) for incorporation into bacterial lipopolysaccharide in Gram-negative bacteria. The protein is 3-deoxy-manno-octulosonate cytidylyltransferase of Chloroherpeton thalassium (strain ATCC 35110 / GB-78).